Reading from the N-terminus, the 572-residue chain is Arginine--tRNA ligase (572 aa).

The 'HIGH' region motif lies at 127 to 137; that stretch reads ANPTGPLHVGH.

It belongs to the class-I aminoacyl-tRNA synthetase family. As to quaternary structure, monomer.

It localises to the cytoplasm. It carries out the reaction tRNA(Arg) + L-arginine + ATP = L-arginyl-tRNA(Arg) + AMP + diphosphate. In Vesicomyosocius okutanii subsp. Calyptogena okutanii (strain HA), this protein is Arginine--tRNA ligase.